We begin with the raw amino-acid sequence, 502 residues long: Membrane protein insertase YidC (502 aa).

A run of 6 helical transmembrane segments spans residues 12-32 (FLIF…FYIY), 286-306 (LDWG…YWIY), 312-332 (WVLS…PLGY), 382-402 (LPIL…IITV), 409-429 (FLWI…VIMG), and 452-472 (ITSV…VLYW).

This sequence belongs to the OXA1/ALB3/YidC family. Type 1 subfamily. In terms of assembly, interacts with the Sec translocase complex via SecD. Specifically interacts with transmembrane segments of nascent integral membrane proteins during membrane integration.

It is found in the cell membrane. Its function is as follows. Required for the insertion and/or proper folding and/or complex formation of integral membrane proteins into the membrane. Involved in integration of membrane proteins that insert both dependently and independently of the Sec translocase complex, as well as at least some lipoproteins. Aids folding of multispanning membrane proteins. This Aquifex aeolicus (strain VF5) protein is Membrane protein insertase YidC.